The chain runs to 512 residues: Ribose import ATP-binding protein RbsA 2 (512 aa).

2 ABC transporter domains span residues 22–258 (LEMR…VGRD) and 263–512 (FPKV…TGNA). An ATP-binding site is contributed by 54 to 61 (GENGAGKS).

This sequence belongs to the ABC transporter superfamily. Ribose importer (TC 3.A.1.2.1) family. In terms of assembly, the complex is composed of an ATP-binding protein (RbsA), two transmembrane proteins (RbsC) and a solute-binding protein (RbsB).

The protein localises to the cell inner membrane. It catalyses the reaction D-ribose(out) + ATP + H2O = D-ribose(in) + ADP + phosphate + H(+). Its function is as follows. Part of the ABC transporter complex RbsABC involved in ribose import. Responsible for energy coupling to the transport system. The protein is Ribose import ATP-binding protein RbsA 2 of Rhizobium johnstonii (strain DSM 114642 / LMG 32736 / 3841) (Rhizobium leguminosarum bv. viciae).